Here is a 623-residue protein sequence, read N- to C-terminus: Xaa-Pro aminopeptidase 1 (623 aa).

Arginine 77 contacts a peptide. At lysine 304 the chain carries N6-acetyllysine. Histidine 395 is an a peptide binding site. 3 residues coordinate Mn(2+): aspartate 415, aspartate 426, and histidine 489. A peptide is bound by residues histidine 489, histidine 498, and glutamate 523. Mn(2+) is bound by residues glutamate 523 and glutamate 537.

This sequence belongs to the peptidase M24B family. Homodimer. Mn(2+) is required as a cofactor. As to expression, expressed in all tissues tested, including pancreas, heart, muscle, kidney, liver, lung and brain. Highest levels in pancreas.

It localises to the cytoplasm. Its subcellular location is the cytosol. The catalysed reaction is Release of any N-terminal amino acid, including proline, that is linked to proline, even from a dipeptide or tripeptide.. With respect to regulation, inhibited by apstatin and the metal ion chelators EDTA and 1,10-phenanthroline. Partially inhibited by dithiothreitol. Not inhibited by enalaprilat or amastatin. Specifically inhibited by the pseudodipeptide CQ31. Inhibition by CQ31 indirectly activates the CARD8 inflammasome: dipeptide accumulation following PEPD inactivation weaky inhibit dipeptidyl peptidases DDP8 and DPP9, relieving DPP8- and/or DPP9-mediated inhibition of CARD8. Its function is as follows. Metalloaminopeptidase that catalyzes the removal of a penultimate prolyl residue from the N-termini of peptides, such as Arg-Pro-Pro. Contributes to the degradation of bradykinin. The sequence is that of Xaa-Pro aminopeptidase 1 from Homo sapiens (Human).